A 942-amino-acid polypeptide reads, in one-letter code: Envelope glycoprotein (942 aa).

The first 80 residues, 1–80 (MDAGASYMRL…LLWTNMCVRA (80 aa)), serve as a signal peptide directing secretion. N-linked (GlcNAc...) asparagine; by host glycosylation is found at Asn51, Asn98, Asn131, Asn176, Asn228, Asn331, Asn348, Asn354, Asn370, Asn379, Asn400, Asn404, Asn435, Asn441, Asn447, Asn457, Asn467, Asn481, Asn493, Asn503, Asn509, Asn527, and Asn534. The Extracellular segment spans residues 81–799 (EDYITLISDP…SLKEVFDWSG (719 aa)). The fusion peptide stretch occupies residues 631–651 (GVGLVIMLVIMAIVAAAGASL). 2 coiled-coil regions span residues 663 to 713 (KAAV…RIML) and 754 to 789 (RELQ…DVWE). Residues 697–713 (LEARVARVEAITDRIML) form an immunosuppression region. Residues 800 to 820 (WFSWLKYIPIIVVGLVGCILI) form a helical membrane-spanning segment. Residues 821 to 942 (RAVICVCQPL…VDCETWGKGD (122 aa)) lie on the Cytoplasmic side of the membrane.

The mature envelope protein (Env) consists of a trimer of SU-TM heterodimers attached by noncovalent interactions or by a labile interchain disulfide bond. Specific enzymatic cleavages in vivo yield mature proteins. Envelope glycoproteins are synthesized as an inactive precursor that is N-glycosylated and processed likely by host cell furin or by a furin-like protease in the Golgi to yield the mature SU and TM proteins. The cleavage site between SU and TM requires the minimal sequence [KR]-X-[KR]-R.

It is found in the virion membrane. The protein localises to the host cell membrane. Its function is as follows. The surface protein (SU) attaches the virus to the host cell by binding to its receptor. This interaction triggers the refolding of the transmembrane protein (TM) and is thought to activate its fusogenic potential by unmasking its fusion peptide. Fusion occurs at the host cell plasma membrane. In terms of biological role, the transmembrane protein (TM) acts as a class I viral fusion protein. Under the current model, the protein has at least 3 conformational states: pre-fusion native state, pre-hairpin intermediate state, and post-fusion hairpin state. During viral and target cell membrane fusion, the coiled coil regions (heptad repeats) assume a trimer-of-hairpins structure, positioning the fusion peptide in close proximity to the C-terminal region of the ectodomain. The formation of this structure appears to drive apposition and subsequent fusion of viral and target cell membranes. Membranes fusion leads to delivery of the nucleocapsid into the cytoplasm. The protein is Envelope glycoprotein (env) of Caprine arthritis encephalitis virus (strain 63) (CAEV-63).